The primary structure comprises 259 residues: Ribosome maturation factor RimP (259 aa).

Positions 186-195 are enriched in basic and acidic residues; the sequence is RGKQAERELK. The interval 186 to 259 is disordered; it reads RGKQAERELK…RGDTDLSEGD (74 aa). Basic residues predominate over residues 239-248; that stretch reads KQHRLAAGRS.

The protein belongs to the RimP family.

Its subcellular location is the cytoplasm. In terms of biological role, required for maturation of 30S ribosomal subunits. The chain is Ribosome maturation factor RimP from Rhodopseudomonas palustris (strain HaA2).